We begin with the raw amino-acid sequence, 590 residues long: Ras-specific guanine nucleotide-releasing factor RalGPS2 (590 aa).

One can recognise a Ras-GEF domain in the interval Thr-49–Gly-287. The interval Ala-288–Ala-319 is disordered. Residues Ser-293, Ser-296, and Ser-308 each carry the phosphoserine modification. Positions Pro-331 to Pro-334 match the PXXP motif. Phosphothreonine is present on Thr-333. Phosphoserine is present on residues Ser-336 and Ser-350. Thr-368 bears the Phosphothreonine mark. A disordered region spans residues Asp-380–Ser-413. Position 381 is a phosphoserine (Ser-381). A compositionally biased stretch (low complexity) spans Glu-394–Ser-410. At Ser-429 the chain carries Phosphoserine. The PH domain maps to Ala-464–Gln-576. The required for stimulation of nucleotide exchange by RALA stretch occupies residues Thr-466–Glu-590.

As to quaternary structure, interacts with RALA. Interacts with the SH3 domains of GRB2 and PLCG1. In terms of tissue distribution, abundant in brain and testis.

It localises to the cytoplasm. Its subcellular location is the cell membrane. In terms of biological role, guanine nucleotide exchange factor for the small GTPase RALA. May be involved in cytoskeletal organization. May also be involved in the stimulation of transcription in a Ras-independent fashion. The polypeptide is Ras-specific guanine nucleotide-releasing factor RalGPS2 (Ralgps2) (Mus musculus (Mouse)).